The chain runs to 192 residues: Probable apo-citrate lyase phosphoribosyl-dephospho-CoA transferase (192 aa).

This sequence belongs to the CitX family.

The enzyme catalyses apo-[citrate lyase ACP] + 2'-(5''-triphospho-alpha-D-ribosyl)-3'-dephospho-CoA = holo-[citrate lyase ACP] + diphosphate. Its function is as follows. Transfers 2-(5''-triphosphoribosyl)-3'-dephosphocoenzyme-A on a serine residue to the apo-acyl carrier protein (gamma chain) of the citrate lyase to yield holo-acyl carrier protein. This is Probable apo-citrate lyase phosphoribosyl-dephospho-CoA transferase from Streptococcus pyogenes serotype M3 (strain ATCC BAA-595 / MGAS315).